Consider the following 219-residue polypeptide: Large ribosomal subunit protein uL4c (219 aa).

The interval 53–81 (REHTASTKTKSQVRGGGKKPWKQKGTGRA) is disordered. A compositionally biased stretch (basic residues) spans 68–79 (GGKKPWKQKGTG).

This sequence belongs to the universal ribosomal protein uL4 family. Part of the 50S ribosomal subunit.

The protein resides in the plastid. It localises to the chloroplast. In terms of biological role, probably binds the 23S rRNA. The sequence is that of Large ribosomal subunit protein uL4c (rpl4) from Cyanidium caldarium (Red alga).